The following is a 286-amino-acid chain: ATP synthase gamma chain (286 aa).

This sequence belongs to the ATPase gamma chain family. As to quaternary structure, F-type ATPases have 2 components, CF(1) - the catalytic core - and CF(0) - the membrane proton channel. CF(1) has five subunits: alpha(3), beta(3), gamma(1), delta(1), epsilon(1). CF(0) has three main subunits: a, b and c.

Its subcellular location is the cell inner membrane. Its function is as follows. Produces ATP from ADP in the presence of a proton gradient across the membrane. The gamma chain is believed to be important in regulating ATPase activity and the flow of protons through the CF(0) complex. This is ATP synthase gamma chain from Flavobacterium psychrophilum (strain ATCC 49511 / DSM 21280 / CIP 103535 / JIP02/86).